A 631-amino-acid chain; its full sequence is Clathrin interactor 1 (631 aa).

One can recognise an ENTH domain in the interval 24-157 (NVVMNYSEIE…QDDDRLREER (134 aa)). Arginine 37 is an a 1,2-diacyl-sn-glycero-3-phospho-(1D-myo-inositol-4,5-bisphosphate) binding site. Residues 60–62 (FMY) form an interaction with VTI1B region. Arginine 75 provides a ligand contact to a 1,2-diacyl-sn-glycero-3-phospho-(1D-myo-inositol-4,5-bisphosphate). Interaction with VTI1B stretches follow at residues 102–104 (SER) and 150–161 (DDRLREERKKAK). 7 positions are modified to phosphoserine: serine 171, serine 174, serine 213, serine 218, serine 235, serine 253, and serine 307. Residues 227–339 (FRRKDREDSP…SSGDLVDLFD (113 aa)) are disordered. The segment covering 230-247 (KDREDSPERCSDSDEEKK) has biased composition (basic and acidic residues). Polar residues predominate over residues 308-318 (PDQNASTHTPQ). A Phosphothreonine modification is found at threonine 316. Low complexity predominate over residues 319–331 (SSAKPSVPSSKSS). Phosphoserine is present on residues serine 320 and serine 630.

This sequence belongs to the epsin family. As to quaternary structure, binds clathrin heavy chain and AP-2. Interacts with VTI1B. Interacts with GGA2 (via GAE domain). Interacts with AP1G1 (via GAE domain). Interacts with AP1G2 (via GAE domain).

The protein localises to the cytoplasm. The protein resides in the perinuclear region. It is found in the membrane. It localises to the cytoplasmic vesicle. Its subcellular location is the clathrin-coated vesicle. Functionally, binds to membranes enriched in phosphatidylinositol 4,5-bisphosphate (PtdIns(4,5)P2). May have a role in transport via clathrin-coated vesicles from the trans-Golgi network to endosomes. Stimulates clathrin assembly. In Mus musculus (Mouse), this protein is Clathrin interactor 1 (Clint1).